Reading from the N-terminus, the 490-residue chain is GTPase Der (490 aa).

EngA-type G domains are found at residues 3–166 (PVVA…MEDL) and 203–376 (IKLA…DSST). Residues 9–16 (GRPNVGKS), 56–60 (DTGGI), 118–121 (NKID), 209–216 (GRPNVGKS), 256–260 (DTAGV), and 321–324 (NKWD) contribute to the GTP site. Positions 377–461 (RRVGTSMLTR…PIRIQFKEGE (85 aa)) constitute a KH-like domain.

It belongs to the TRAFAC class TrmE-Era-EngA-EngB-Septin-like GTPase superfamily. EngA (Der) GTPase family. As to quaternary structure, associates with the 50S ribosomal subunit.

GTPase that plays an essential role in the late steps of ribosome biogenesis. The protein is GTPase Der of Shigella boydii serotype 18 (strain CDC 3083-94 / BS512).